A 107-amino-acid polypeptide reads, in one-letter code: Nucleoid-associated protein RT0857 (107 aa).

Belongs to the YbaB/EbfC family. As to quaternary structure, homodimer.

It localises to the cytoplasm. Its subcellular location is the nucleoid. Binds to DNA and alters its conformation. May be involved in regulation of gene expression, nucleoid organization and DNA protection. This is Nucleoid-associated protein RT0857 from Rickettsia typhi (strain ATCC VR-144 / Wilmington).